Here is a 587-residue protein sequence, read N- to C-terminus: Lipoprotein LpqB (587 aa).

The N-terminal stretch at 1–19 (MERLMRLTILLFLGAVLAG) is a signal peptide. Cysteine 20 is lipidated: N-palmitoyl cysteine. Residue cysteine 20 is the site of S-diacylglycerol cysteine attachment.

This sequence belongs to the LpqB lipoprotein family.

It is found in the cell membrane. This chain is Lipoprotein LpqB, found in Mycobacterium bovis (strain ATCC BAA-935 / AF2122/97).